The primary structure comprises 514 residues: Probable transposase for insertion sequence element IS1353 (514 aa).

The stretch at 172-216 (KGDTSLEQRHEALLRELAELESQNQRLRMENAILEKASELIKKDM) forms a coiled coil. The region spanning 346-510 (HASAPNTKWL…SPIEYRHAVG (165 aa)) is the Integrase catalytic domain. Mg(2+) is bound by residues D357 and D417.

It belongs to the transposase 8 family.

Its function is as follows. Probably involved in the transposition of insertion sequence IS1353. The polypeptide is Probable transposase for insertion sequence element IS1353 (Shigella flexneri).